Here is a 400-residue protein sequence, read N- to C-terminus: Enoyl-[acyl-carrier-protein] reductase [NADH] (400 aa).

NAD(+) contacts are provided by residues G48 to Y53, F74 to E75, D111 to A112, and L139 to A140. Residue Y225 participates in substrate binding. Residue Y235 is the Proton donor of the active site. Residues K244 and V273–T275 each bind NAD(+).

The protein belongs to the TER reductase family. As to quaternary structure, monomer.

It catalyses the reaction a 2,3-saturated acyl-[ACP] + NAD(+) = a (2E)-enoyl-[ACP] + NADH + H(+). It participates in lipid metabolism; fatty acid biosynthesis. Involved in the final reduction of the elongation cycle of fatty acid synthesis (FAS II). Catalyzes the reduction of a carbon-carbon double bond in an enoyl moiety that is covalently linked to an acyl carrier protein (ACP). This chain is Enoyl-[acyl-carrier-protein] reductase [NADH], found in Burkholderia multivorans (strain ATCC 17616 / 249).